The chain runs to 416 residues: Gamma-glutamyl phosphate reductase (416 aa).

Belongs to the gamma-glutamyl phosphate reductase family.

The protein resides in the cytoplasm. It catalyses the reaction L-glutamate 5-semialdehyde + phosphate + NADP(+) = L-glutamyl 5-phosphate + NADPH + H(+). It participates in amino-acid biosynthesis; L-proline biosynthesis; L-glutamate 5-semialdehyde from L-glutamate: step 2/2. Functionally, catalyzes the NADPH-dependent reduction of L-glutamate 5-phosphate into L-glutamate 5-semialdehyde and phosphate. The product spontaneously undergoes cyclization to form 1-pyrroline-5-carboxylate. This is Gamma-glutamyl phosphate reductase from Actinobacillus succinogenes (strain ATCC 55618 / DSM 22257 / CCUG 43843 / 130Z).